The following is a 74-amino-acid chain: Benzylsuccinate synthase beta subunit (74 aa).

Heterohexamer composed of 2 alpha subunits, 2 beta subunits and 2 gamma subunits.

The catalysed reaction is toluene + fumarate = 2-benzylsuccinate. It participates in xenobiotic degradation; toluene degradation. Its activity is regulated as follows. Activated by the benzylsuccinate synthase activating enzyme BssD. Rapidly inactivated by oxygen. Functionally, catalyzes the addition of fumarate to the methyl group of toluene, leading to the formation of benzylsuccinate. The sequence is that of Benzylsuccinate synthase beta subunit (bssB) from Thauera aromatica.